Consider the following 347-residue polypeptide: Probable arabinogalactan endo-beta-1,4-galactanase A (347 aa).

Residues Met1–Ala16 form the signal peptide. Glu150 serves as the catalytic Proton donor. Glu260 (nucleophile) is an active-site residue.

The protein belongs to the glycosyl hydrolase 53 family.

It localises to the secreted. The catalysed reaction is The enzyme specifically hydrolyzes (1-&gt;4)-beta-D-galactosidic linkages in type I arabinogalactans.. Functionally, endogalactanase involved in the degradation of plant cell wall polysaccharides, and more particularly of hairy regions of pectin. In Aspergillus oryzae (strain ATCC 42149 / RIB 40) (Yellow koji mold), this protein is Probable arabinogalactan endo-beta-1,4-galactanase A (galA).